Consider the following 587-residue polypeptide: Sedolisin (587 aa).

An N-terminal signal peptide occupies residues Met1–Gly32. A propeptide spans Ala33–Leu215 (removed in mature form). One can recognise a Peptidase S53 domain in the interval Thr219–Asn583. The tract at residues Thr276–Glu295 is disordered. Active-site charge relay system residues include Glu295 and Asp299. Cys352 and Cys391 are oxidised to a cystine. The active-site Charge relay system is the Ser502. 5 residues coordinate Ca(2+): Asp543, Val544, Gly559, Gly561, and Asp563. The propeptide at Gly586–His587 is removed in mature form.

Ca(2+) is required as a cofactor. Autocatalytically processed.

The protein resides in the periplasm. The enzyme catalyses Hydrolysis of the B chain of insulin at 13-Glu-|-Ala-14, 15-Leu-|-Tyr-16 and 25-Phe-|-Tyr-26 and angiotensin I at 4-Tyr-|-Ile-5. A good synthetic substrate is Lys-Pro-Ile-Glu-Phe-|-Phe(NO2)-Arg-Leu.. With respect to regulation, inhibited by 1,2-epoxy-3-(p-nitrophenoxy)propane (EPNP), but not by carboxyl proteinase inhibitors, such as pepstatin, pepstatin Ac (S-PI) and diazoacetyl-DL-norleucine methyl ester (DAN). Inhibited by tyrostatin, pseudo-tyrostatin, AcIPF, AcIAF, chymostatin and pseudo-iodotyrostatin. Pepstatin-insensitive serine-carboxyl proteinase. In vitro can hydrolyze various synthetic peptides. Also shows activity on acid-denatured hemoglobin and on casein. This is Sedolisin (pcp) from Pseudomonas sp. (strain 101) (Achromobacter parvulus T1).